Consider the following 201-residue polypeptide: Holliday junction branch migration complex subunit RuvA (201 aa).

The tract at residues 1-63 (MYDYIKGTVT…EDNISLFGFQ (63 aa)) is domain I. The tract at residues 64–142 (TTEERYLFKK…DVVASEIVYV (79 aa)) is domain II. The interval 143 to 153 (APENDMVAGLS) is flexible linker. Residues 153–201 (SPQLEEAVLALEALGYSTRELKKVIPKLSKEEDLTSDAYIKLALQLMTK) are domain III.

Belongs to the RuvA family. As to quaternary structure, homotetramer. Forms an RuvA(8)-RuvB(12)-Holliday junction (HJ) complex. HJ DNA is sandwiched between 2 RuvA tetramers; dsDNA enters through RuvA and exits via RuvB. An RuvB hexamer assembles on each DNA strand where it exits the tetramer. Each RuvB hexamer is contacted by two RuvA subunits (via domain III) on 2 adjacent RuvB subunits; this complex drives branch migration. In the full resolvosome a probable DNA-RuvA(4)-RuvB(12)-RuvC(2) complex forms which resolves the HJ.

It is found in the cytoplasm. Functionally, the RuvA-RuvB-RuvC complex processes Holliday junction (HJ) DNA during genetic recombination and DNA repair, while the RuvA-RuvB complex plays an important role in the rescue of blocked DNA replication forks via replication fork reversal (RFR). RuvA specifically binds to HJ cruciform DNA, conferring on it an open structure. The RuvB hexamer acts as an ATP-dependent pump, pulling dsDNA into and through the RuvAB complex. HJ branch migration allows RuvC to scan DNA until it finds its consensus sequence, where it cleaves and resolves the cruciform DNA. The chain is Holliday junction branch migration complex subunit RuvA from Listeria monocytogenes serotype 4b (strain CLIP80459).